A 616-amino-acid chain; its full sequence is Carboxylic acid transporter protein homolog (616 aa).

The span at 1 to 11 (MSSSITDEKIS) shows a compositional bias: basic and acidic residues. Residues 1–65 (MSSSITDEKI…LYHNPSLPAQ (65 aa)) are disordered. S2 carries the post-translational modification N-acetylserine. At 2 to 140 (SSSITDEKIS…LRKMTWQNWN (139 aa)) the chain is on the cytoplasmic side. A Phosphoserine modification is found at S4. Residue K9 forms a Glycyl lysine isopeptide (Lys-Gly) (interchain with G-Cter in ubiquitin) linkage. 3 positions are modified to phosphoserine: S11, S61, and S66. Phosphothreonine is present on T70. A helical transmembrane segment spans residues 141-161 (YFFMGYFAWLSAAWAFFCVSV). The Extracellular portion of the chain corresponds to 162–176 (SVAPLAELYDRPTKD). The chain crosses the membrane as a helical span at residues 177–197 (ITWGLGLVLFVRSAGAVIFGL). The Cytoplasmic portion of the chain corresponds to 198 to 205 (WTDKSSRK). Residues 206–226 (WPYITCLFLFVIAQLCTPWCD) form a helical membrane-spanning segment. The Extracellular portion of the chain corresponds to 227–230 (TYEK). The helical transmembrane segment at 231 to 251 (FLGVRWITGIAMGGIYGCASA) threads the bilayer. Topologically, residues 252 to 263 (TAIEDAPVKARS) are cytoplasmic. The helical transmembrane segment at 264–284 (FLSGLFFSAYAMGFIFAIIFY) threads the bilayer. Residues 285-296 (RAFGYFRDDGWK) lie on the Extracellular side of the membrane. A helical transmembrane segment spans residues 297 to 317 (ILFWFSIFLPILLIFWRLLWP). Residues 318–363 (ETKYFTKVLKARKLILSDAVKANGGEPLPKANFKQKMVSMKRTVQK) lie on the Cytoplasmic side of the membrane. A Glycyl lysine isopeptide (Lys-Gly) (interchain with G-Cter in ubiquitin) cross-link involves residue K338. The helical transmembrane segment at 364 to 384 (YWLLFAYLVVLLVGPNYLTHA) threads the bilayer. At 385–402 (SQDLLPTMLRAQLGLSKD) the chain is on the extracellular side. The chain crosses the membrane as a helical span at residues 403 to 423 (AVTVIVVVTNIGAICGGMIFG). The Cytoplasmic portion of the chain corresponds to 424–432 (QFMEVTGRR). Residues 433–453 (LGLLIACTMGGCFTYPAFMLR) form a helical membrane-spanning segment. At 454–457 (SEKA) the chain is on the extracellular side. The chain crosses the membrane as a helical span at residues 458-478 (ILGAGFMLYFCVFGVWGILPI). Residues 479–489 (HLAELAPADAR) lie on the Cytoplasmic side of the membrane. Residues 490-510 (ALVAGLSYQLGNLASAAASTI) form a helical membrane-spanning segment. The Extracellular segment spans residues 511–535 (ETQLADRYPLERDASGAVIKEDYAK). The chain crosses the membrane as a helical span at residues 536–556 (VMAILTGSVFIFTFACVFVGH). Residues 557–616 (EKFHRDLSSPVMKKYINQVEEYEADGLSISDIVEQKTECASVKMIDSNVSKTYEEHIETV) lie on the Cytoplasmic side of the membrane. S584, S603, and S606 each carry phosphoserine.

The protein belongs to the major facilitator superfamily. Sugar transporter (TC 2.A.1.1) family.

It localises to the membrane. In terms of biological role, essential to lactate transport. The polypeptide is Carboxylic acid transporter protein homolog (JEN1) (Saccharomyces cerevisiae (strain ATCC 204508 / S288c) (Baker's yeast)).